The sequence spans 485 residues: UBX domain-containing protein 11 (485 aa).

A disordered region spans residues 1 to 26; it reads MSSPLASLSKTRKVPLESEPVNPGRR. A coiled-coil region spans residues 67 to 143; sequence HDSELLTSMA…VGEMERFLND (77 aa). An SEP domain is found at 224–288; it reads LEPIPLKLYR…VSDLRNQVYP (65 aa). Residues 386–463 form the UBX domain; sequence PVPPLSMLRI…GLVPNATLLL (78 aa). Residues Ser-479 and Ser-483 each carry the phosphoserine modification.

In terms of assembly, interacts with GNA12, GNA13, RND1, RND2 and RND3. In terms of tissue distribution, strongly expressed in testis. Also expressed in lung, brain and thymus.

It is found in the cytoplasm. Its subcellular location is the cytoskeleton. Functionally, may be involved in the reorganization of actin cytoskeleton mediated by RND1, RND2 and RND3. Promotes RHOA activation mediated by GNA12 and GNA13. In Rattus norvegicus (Rat), this protein is UBX domain-containing protein 11 (Ubxn11).